The following is a 476-amino-acid chain: Glutamate--tRNA ligase (476 aa).

A 'HIGH' region motif is present at residues 9–19 (PSPTGTLHIGT). The 'KMSKS' region motif lies at 248–252 (KLSKR). Position 251 (lysine 251) interacts with ATP.

The protein belongs to the class-I aminoacyl-tRNA synthetase family. Glutamate--tRNA ligase type 1 subfamily. In terms of assembly, monomer.

The protein resides in the cytoplasm. The catalysed reaction is tRNA(Glu) + L-glutamate + ATP = L-glutamyl-tRNA(Glu) + AMP + diphosphate. Functionally, catalyzes the attachment of glutamate to tRNA(Glu) in a two-step reaction: glutamate is first activated by ATP to form Glu-AMP and then transferred to the acceptor end of tRNA(Glu). The sequence is that of Glutamate--tRNA ligase from Prochlorococcus marinus (strain MIT 9303).